The following is a 702-amino-acid chain: SAGA complex subunit NGG1 (702 aa).

Positions 1–10 (MPRHGRRGKL) are enriched in basic residues. 2 disordered regions span residues 1-29 (MPRH…PSKL) and 90-224 (LRKI…VKNP). Basic and acidic residues-rich tracts occupy residues 11-22 (PKGEKLPKKEGG) and 90-108 (LRKI…EKQE). A compositionally biased stretch (polar residues) spans 109-125 (TSNADGQHESSTATEET). S134 is modified (phosphoserine). The span at 162–219 (MAKEEINEDKDLQVHRDQPREKRPFDSETENRATENENTQRPDNKKQKIDVDKMENDP) shows a compositional bias: basic and acidic residues. Residue S407 is modified to Phosphoserine. T464 is subject to Phosphothreonine. The Nuclear localization signal motif lies at 606–618 (KRIRVPKKRKKHH). 2 disordered regions span residues 611–636 (PKKR…IAQQ) and 672–702 (NESV…VELN). Polar residues predominate over residues 620 to 636 (AASNNVNTGTTSQIAQQ). Residues 680-689 (DQEEDEDEAD) are compositionally biased toward acidic residues.

The protein belongs to the NGG1 family. As to quaternary structure, component of the 1.8 MDa SAGA (Spt-Ada-Gcn5 acetyltransferase) complex, which is composed of 19 subunits TRA1, SPT7, TAF5, NGG1/ADA3, SGF73, SPT20/ADA5, SPT8, TAF12, TAF6, HFI1/ADA1, UBP8, GCN5, ADA2, SPT3, SGF29, TAF10, TAF9, SGF11 and SUS1. The SAGA complex is composed of 4 modules, namely the HAT (histone acetyltransferase) module (GCN5, ADA2, NGG1/ADA3 and SGF29), the DUB (deubiquitinating) module (UBP8, SGF11, SGF73 and SUS1), the core or TAF (TBP-associated factor) module (TAF5, TAF6, TAF9, TAF10 and TAF12), and the Tra1 or SPT (Suppressor of Ty) module (TRA1, HFI1/ADA1, SPT3, SPT7, SPT8 and SPT20/ADA5). The Tra1/SPT module binds activators, the core module recruits TBP (TATA-binding protein), the HAT module contains the histone H3 acetyltransferase GCN5, and the DUB module comprises the histone H2B deubiquitinase UBP8. Also identified in an altered form of SAGA, named SALSA (SAGA altered, Spt8 absent) or SLIK (SAGA-like) complex, which contains a C-terminal truncated form of SPT7 and is missing SPT8. However, it has been shown that the SAGA and SAGA-like SALSA/SLIK transcriptional coactivators are structurally and biochemically equivalent. Component of the 0.8 MDa ADA complex, a HAT complex distinct from SAGA, which at least consists of ADA2, NGG1/ADA3, AHC1, AHC2, SGF29 and GCN5. Identified in an Ada.spt complex with SPT7 and TRA1. Component of an ADA/GCN5 complex that consists of HFI1/ADA1, ADA2, NGG1/ADA3, SPT20/ADA5 and GCN5 and probably is a subcomplex of SAGA.

The protein resides in the nucleus. Its function is as follows. Component of the transcription coactivator SAGA complex. SAGA acts as a general cofactor required for essentially all RNA polymerase II transcription. At the promoters, SAGA is required for transcription pre-initiation complex (PIC) recruitment. It influences RNA polymerase II transcriptional activity through different activities such as TBP interaction (via core/TAF module) and promoter selectivity, interaction with transcription activators (via Tra1/SPT module), and chromatin modification through histone acetylation (via HAT module) and deubiquitination (via DUB module). SAGA preferentially acetylates histones H3 (to form H3K9ac, H3K14ac, H3K18ac and H3K23ac) and H2B and deubiquitinates histone H2B. SAGA interacts with DNA via upstream activating sequences (UASs). Also identified in a modified version of SAGA named SALSA or SLIK. The cleavage of SPT7 and the absence of the SPT8 subunit in SLIK neither drive any major conformational differences in its structure compared with SAGA, nor significantly affect HAT, DUB, or DNA-binding activities. Component of the ADA histone acetyltransferase complex, which preferentially acetylates nucleosomal histones H3 (to form H3K14ac and H3K18ac) and H2B. May be involved in response to DNA damage by genotoxic agents. The sequence is that of SAGA complex subunit NGG1 (NGG1) from Saccharomyces cerevisiae (strain ATCC 204508 / S288c) (Baker's yeast).